A 247-amino-acid polypeptide reads, in one-letter code: MAGHSKWSQIKRTKAVVDAKRGAVFTRIGREITVAARQGADPDGNFQLRTAIAKAKAAGVPAGNIERAIAKGSGQGGEAIKLESIRYEGYGPGGVAVLVEALSDNRNRTAAELRLAFSKHGGNLGESGCVSYLFQHRSEVRIEADAEREEALLESLLSLEADGYELGDDGQALVHGPYEVLESLQNGLRQQSWQVQEWTHAWHPLTQVVPQDPDTTRQCLKLLEALEDLDDVNSISTNLEIDDAFVP.

It belongs to the TACO1 family.

Its subcellular location is the cytoplasm. This chain is Probable transcriptional regulatory protein SynWH7803_1972, found in Synechococcus sp. (strain WH7803).